We begin with the raw amino-acid sequence, 246 residues long: Phosducin (246 aa).

The span at 1–14 (MEEAKSQSLEEDFE) shows a compositional bias: acidic residues. Residues 1-70 (MEEAKSQSLE…GKDSKERVSR (70 aa)) are disordered. The Phosducin domain maps to 1-244 (MEEAKSQSLE…LEHTKIEEED (244 aa)). Basic and acidic residues predominate over residues 60-69 (NGKDSKERVS). Serine 73 is modified (phosphoserine; by PKA). The thioredoxin fold stretch occupies residues 111–246 (YGFVYELETG…HTKIEEEDVE (136 aa)).

It belongs to the phosducin family. Forms a complex with the beta and gamma subunits of the GTP-binding protein, transducin. Interacts with CRX. Light-induced changes in cyclic nucleotide levels modulate the phosphorylation of this protein by cAMP kinase.

It is found in the cytoplasm. It localises to the cytosol. Its subcellular location is the nucleus. The protein localises to the cell projection. The protein resides in the cilium. It is found in the photoreceptor outer segment. It localises to the photoreceptor inner segment. Functionally, may participate in the regulation of visual phototransduction or in the integration of photoreceptor metabolism. Inhibits the transcriptional activation activity of the cone-rod homeobox CRX. The chain is Phosducin (PDC) from Homo sapiens (Human).